A 141-amino-acid chain; its full sequence is Hemoglobin subunit alpha (141 aa).

In terms of domain architecture, Globin spans 1 to 141 (VLSPADKTNV…VSTVLTSKYR (141 aa)). Phosphoserine is present on serine 3. Lysine 7 carries the post-translational modification N6-succinyllysine. Threonine 8 carries the phosphothreonine modification. Lysine 11 carries the N6-succinyllysine modification. Lysine 16 is subject to N6-acetyllysine; alternate. The residue at position 16 (lysine 16) is an N6-succinyllysine; alternate. Position 24 is a phosphotyrosine (tyrosine 24). Serine 35 carries the post-translational modification Phosphoserine. The residue at position 40 (lysine 40) is an N6-succinyllysine. Serine 49 bears the Phosphoserine mark. An O2-binding site is contributed by histidine 58. Residue histidine 87 participates in heme b binding. Position 102 is a phosphoserine (serine 102). At threonine 108 the chain carries Phosphothreonine. Serine 124 carries the post-translational modification Phosphoserine. Residues threonine 134 and threonine 137 each carry the phosphothreonine modification. Serine 138 carries the phosphoserine modification.

Belongs to the globin family. Heterotetramer of two alpha chains and two beta chains. In terms of tissue distribution, red blood cells.

Involved in oxygen transport from the lung to the various peripheral tissues. Its function is as follows. Hemopressin acts as an antagonist peptide of the cannabinoid receptor CNR1. Hemopressin-binding efficiently blocks cannabinoid receptor CNR1 and subsequent signaling. This Lutra lutra (European river otter) protein is Hemoglobin subunit alpha (HBA).